The following is a 184-amino-acid chain: dITP/XTP pyrophosphatase (184 aa).

Residue 7–12 (TSNPGK) participates in substrate binding. Glutamate 36 and aspartate 65 together coordinate Mg(2+). The active-site Proton acceptor is aspartate 65. Substrate is bound by residues serine 66, 139 to 142 (FGFD), lysine 162, and 167 to 168 (HR).

It belongs to the HAM1 NTPase family. Homodimer. It depends on Mg(2+) as a cofactor.

The enzyme catalyses XTP + H2O = XMP + diphosphate + H(+). It catalyses the reaction dITP + H2O = dIMP + diphosphate + H(+). The catalysed reaction is ITP + H2O = IMP + diphosphate + H(+). Functionally, pyrophosphatase that catalyzes the hydrolysis of nucleoside triphosphates to their monophosphate derivatives, with a high preference for the non-canonical purine nucleotides XTP (xanthosine triphosphate), dITP (deoxyinosine triphosphate) and ITP. Seems to function as a house-cleaning enzyme that removes non-canonical purine nucleotides from the nucleotide pool, thus preventing their incorporation into DNA/RNA and avoiding chromosomal lesions. This is dITP/XTP pyrophosphatase from Thermococcus kodakarensis (strain ATCC BAA-918 / JCM 12380 / KOD1) (Pyrococcus kodakaraensis (strain KOD1)).